Here is a 389-residue protein sequence, read N- to C-terminus: uncharacterized protein (389 aa).

A compositionally biased stretch (polar residues) spans M1–E12. 2 disordered regions span residues M1–L49 and H86–A111. Acidic residues predominate over residues E40–L49. The span at R93–R110 shows a compositional bias: basic residues.

This is an uncharacterized protein from Caenorhabditis elegans.